The chain runs to 394 residues: Flap endonuclease 1 (394 aa).

The N-domain stretch occupies residues 1–104 (MGIKQLFSII…GELAKRFQRK (104 aa)). Mg(2+) is bound at residue aspartate 34. 2 residues coordinate DNA: arginine 47 and arginine 70. 5 residues coordinate Mg(2+): aspartate 86, glutamate 158, glutamate 160, aspartate 179, and aspartate 181. Residues 122 to 253 (DVEKFSRRTV…STALKLIREH (132 aa)) form an I-domain region. Residue glutamate 158 coordinates DNA. Residues glycine 231 and aspartate 233 each contribute to the DNA site. Aspartate 233 provides a ligand contact to Mg(2+). Residues 341-349 (QQARIEGFF) are interaction with PCNA. Basic and acidic residues predominate over residues 356–383 (EEEKKAHKRKLEEQAEQKRKKVKEEKKE). The interval 356-394 (EEEKKAHKRKLEEQAEQKRKKVKEEKKEKAKLKAKPRGA) is disordered. Positions 384–394 (KAKLKAKPRGA) are enriched in basic residues.

It belongs to the XPG/RAD2 endonuclease family. FEN1 subfamily. Interacts with PCNA. Three molecules of FEN1 bind to one PCNA trimer with each molecule binding to one PCNA monomer. PCNA stimulates the nuclease activity without altering cleavage specificity. Mg(2+) is required as a cofactor. Phosphorylated. Phosphorylation upon DNA damage induces relocalization to the nuclear plasma.

Its subcellular location is the nucleus. The protein localises to the nucleolus. The protein resides in the nucleoplasm. It is found in the mitochondrion. Functionally, structure-specific nuclease with 5'-flap endonuclease and 5'-3' exonuclease activities involved in DNA replication and repair. During DNA replication, cleaves the 5'-overhanging flap structure that is generated by displacement synthesis when DNA polymerase encounters the 5'-end of a downstream Okazaki fragment. It enters the flap from the 5'-end and then tracks to cleave the flap base, leaving a nick for ligation. Also involved in the long patch base excision repair (LP-BER) pathway, by cleaving within the apurinic/apyrimidinic (AP) site-terminated flap. Acts as a genome stabilization factor that prevents flaps from equilibrating into structures that lead to duplications and deletions. Also possesses 5'-3' exonuclease activity on nicked or gapped double-stranded DNA, and exhibits RNase H activity. Also involved in replication and repair of rDNA and in repairing mitochondrial DNA. This chain is Flap endonuclease 1, found in Sordaria macrospora (strain ATCC MYA-333 / DSM 997 / K(L3346) / K-hell).